The sequence spans 565 residues: Maturase K (565 aa).

It belongs to the intron maturase 2 family. MatK subfamily.

The protein localises to the plastid. It is found in the chloroplast. Functionally, usually encoded in the trnK tRNA gene intron. Probably assists in splicing its own and other chloroplast group II introns. The chain is Maturase K from Staurastrum punctulatum (Green alga).